We begin with the raw amino-acid sequence, 481 residues long: Ribulose bisphosphate carboxylase large chain (481 aa).

Positions 1 to 2 (MS) are excised as a propeptide. Pro-3 carries the N-acetylproline modification. Position 14 is an N6,N6,N6-trimethyllysine (Lys-14). Residues Asn-123 and Thr-173 each contribute to the substrate site. The active-site Proton acceptor is the Lys-175. Lys-177 contributes to the substrate binding site. Lys-201, Asp-203, and Glu-204 together coordinate Mg(2+). Position 201 is an N6-carboxylysine (Lys-201). His-294 (proton acceptor) is an active-site residue. Substrate contacts are provided by Arg-295, His-327, and Ser-379.

It belongs to the RuBisCO large chain family. Type I subfamily. As to quaternary structure, heterohexadecamer of 8 large chains and 8 small chains; disulfide-linked. The disulfide link is formed within the large subunit homodimers. Mg(2+) is required as a cofactor. Post-translationally, the disulfide bond which can form in the large chain dimeric partners within the hexadecamer appears to be associated with oxidative stress and protein turnover.

It localises to the plastid. It carries out the reaction 2 (2R)-3-phosphoglycerate + 2 H(+) = D-ribulose 1,5-bisphosphate + CO2 + H2O. The catalysed reaction is D-ribulose 1,5-bisphosphate + O2 = 2-phosphoglycolate + (2R)-3-phosphoglycerate + 2 H(+). Its function is as follows. RuBisCO catalyzes two reactions: the carboxylation of D-ribulose 1,5-bisphosphate, the primary event in carbon dioxide fixation, as well as the oxidative fragmentation of the pentose substrate in the photorespiration process. Both reactions occur simultaneously and in competition at the same active site. The polypeptide is Ribulose bisphosphate carboxylase large chain (Cuscuta obtusiflora (Peruvian dodder)).